Reading from the N-terminus, the 1199-residue chain is Tubulin monoglutamylase TTLL4 (1199 aa).

Residues 1–25 (MASAGTQHYSIGLRQKNSFKQSGPS) show a composition bias toward polar residues. 3 disordered regions span residues 1–43 (MASA…RVWP), 472–517 (IQLG…ELVD), and 525–544 (RDENEEEEGDSECSSLSAVS). Residues 477-495 (SEKERPEEARELDSSDRDI) show a composition bias toward basic and acidic residues. Positions 506–517 (AETEDTEEELVD) are enriched in acidic residues. In terms of domain architecture, TTL spans 604-947 (RKLLRWKMST…VLPNAEDIIS (344 aa)). Phosphoserine is present on Ser-691. ATP-binding positions include Lys-721, 727–728 (RG), 749–752 (QRYL), and 762–764 (KFD). Arg-727 provides a ligand contact to a protein. Arg-788 is an L-glutamate binding site. Residue 809–810 (TN) participates in ATP binding. Tyr-811, Ser-812, and Lys-833 together coordinate L-glutamate. Mg(2+)-binding residues include Asp-893, Glu-906, and Asn-908. The c-MTBD region stretch occupies residues 918–1029 (PLDISIKGQM…RGQFERIFPS (112 aa)). L-glutamate is bound at residue Lys-924. Residues 1130-1141 (GTTPKSKKTQAG) show a composition bias toward polar residues. The segment at 1130-1199 (GTTPKSKKTQ…ISDSLLAVSP (70 aa)) is disordered. The segment covering 1151–1160 (SSKDSEDTSK) has biased composition (basic and acidic residues). Over residues 1164–1192 (LSTQTLPVIKCSGQTSRLSASSTFQSISD) the composition is skewed to polar residues.

Belongs to the tubulin--tyrosine ligase family. It depends on Mg(2+) as a cofactor.

It localises to the cytoplasm. The protein localises to the cell projection. Its subcellular location is the cilium. It is found in the cytoskeleton. The protein resides in the cilium basal body. It catalyses the reaction L-glutamyl-[protein] + L-glutamate + ATP = gamma-L-glutamyl-L-glutamyl-[protein] + ADP + phosphate + H(+). Monoglutamylase which modifies both tubulin and non-tubulin proteins, adding a single glutamate on the gamma-carboxyl group of specific glutamate residues of target proteins. Involved in the side-chain initiation step of the polyglutamylation reaction but not in the elongation step. Preferentially modifies beta-tail tubulin over the alpha-tubulin. Monoglutamylates nucleosome assembly proteins NAP1L1 and NAP1L4. Monoglutamylates nucleotidyltransferase CGAS, leading to inhibition of CGAS catalytic activity, thereby preventing antiviral defense function. Involved in KLF4 glutamylation which impedes its ubiquitination, thereby leading to somatic cell reprogramming, pluripotency maintenance and embryogenesis. This chain is Tubulin monoglutamylase TTLL4, found in Homo sapiens (Human).